Reading from the N-terminus, the 220-residue chain is Urease accessory protein UreE (220 aa).

The tract at residues 145-220 (EGGAYSAGGH…QIHKRRPDNL (76 aa)) is disordered. Positions 156 to 177 (HGHDHGSHEHSAHDHGKHDHAP) are enriched in basic and acidic residues. The segment covering 178–188 (AKPATAATPAA) has biased composition (low complexity). Positions 191–206 (HGPDCNHGHDHAHEAK) are enriched in basic and acidic residues.

It belongs to the UreE family.

The protein resides in the cytoplasm. Its function is as follows. Involved in urease metallocenter assembly. Binds nickel. Probably functions as a nickel donor during metallocenter assembly. This Polaromonas sp. (strain JS666 / ATCC BAA-500) protein is Urease accessory protein UreE.